The primary structure comprises 347 residues: Heat-inducible transcription repressor HrcA (347 aa).

This sequence belongs to the HrcA family.

Its function is as follows. Negative regulator of class I heat shock genes (grpE-dnaK-dnaJ and groELS operons). Prevents heat-shock induction of these operons. The protein is Heat-inducible transcription repressor HrcA of Mycobacterium sp. (strain JLS).